The chain runs to 84 residues: NADH-ubiquinone oxidoreductase chain 4L (84 aa).

Helical transmembrane passes span 19-39 (ITLL…LIHI) and 50-70 (IFSL…LSIL).

This sequence belongs to the complex I subunit 4L family.

It is found in the mitochondrion membrane. It carries out the reaction a ubiquinone + NADH + 5 H(+)(in) = a ubiquinol + NAD(+) + 4 H(+)(out). Functionally, core subunit of the mitochondrial membrane respiratory chain NADH dehydrogenase (Complex I) that is believed to belong to the minimal assembly required for catalysis. Complex I functions in the transfer of electrons from NADH to the respiratory chain. The immediate electron acceptor for the enzyme is believed to be ubiquinone. The protein is NADH-ubiquinone oxidoreductase chain 4L (NAD4L) of Candida albicans (strain SC5314 / ATCC MYA-2876) (Yeast).